Reading from the N-terminus, the 536-residue chain is Membrane protein insertase YidC (536 aa).

Transmembrane regions (helical) follow at residues 5-25 (LIIA…IFPT), 353-373 (GNYG…FFPL), 418-438 (VNPL…FGLY), and 495-515 (MLML…GLVI).

It belongs to the OXA1/ALB3/YidC family. Type 1 subfamily. Interacts with the Sec translocase complex via SecD. Specifically interacts with transmembrane segments of nascent integral membrane proteins during membrane integration.

It is found in the cell inner membrane. Functionally, required for the insertion and/or proper folding and/or complex formation of integral membrane proteins into the membrane. Involved in integration of membrane proteins that insert both dependently and independently of the Sec translocase complex, as well as at least some lipoproteins. Aids folding of multispanning membrane proteins. This Geobacter sp. (strain M21) protein is Membrane protein insertase YidC.